Reading from the N-terminus, the 308-residue chain is Phosphoribosylaminoimidazole-succinocarboxamide synthase (308 aa).

This sequence belongs to the SAICAR synthetase family.

It catalyses the reaction 5-amino-1-(5-phospho-D-ribosyl)imidazole-4-carboxylate + L-aspartate + ATP = (2S)-2-[5-amino-1-(5-phospho-beta-D-ribosyl)imidazole-4-carboxamido]succinate + ADP + phosphate + 2 H(+). The protein operates within purine metabolism; IMP biosynthesis via de novo pathway; 5-amino-1-(5-phospho-D-ribosyl)imidazole-4-carboxamide from 5-amino-1-(5-phospho-D-ribosyl)imidazole-4-carboxylate: step 1/2. This Xanthomonas euvesicatoria pv. vesicatoria (strain 85-10) (Xanthomonas campestris pv. vesicatoria) protein is Phosphoribosylaminoimidazole-succinocarboxamide synthase.